We begin with the raw amino-acid sequence, 174 residues long: Small ribosomal subunit protein uS5 (174 aa).

In terms of domain architecture, S5 DRBM spans 19-82 (LREKMIAVNR…EQARRGMFKV (64 aa)).

The protein belongs to the universal ribosomal protein uS5 family. As to quaternary structure, part of the 30S ribosomal subunit. Contacts proteins S4 and S8.

Its function is as follows. With S4 and S12 plays an important role in translational accuracy. In terms of biological role, located at the back of the 30S subunit body where it stabilizes the conformation of the head with respect to the body. This is Small ribosomal subunit protein uS5 from Bordetella bronchiseptica (strain ATCC BAA-588 / NCTC 13252 / RB50) (Alcaligenes bronchisepticus).